The primary structure comprises 92 residues: DNA-binding protein HU (92 aa).

Residues 58-92 (AGTARNPRTGETVNRPASKTARFQVGEGLKSSLNS) are disordered.

It belongs to the bacterial histone-like protein family. In terms of assembly, homodimer.

Histone-like DNA-binding protein which is capable of wrapping DNA to stabilize it, and thus to prevent its denaturation under extreme environmental conditions. The sequence is that of DNA-binding protein HU (hup) from Caulobacter vibrioides (strain ATCC 19089 / CIP 103742 / CB 15) (Caulobacter crescentus).